Here is a 196-residue protein sequence, read N- to C-terminus: 3-isopropylmalate dehydratase small subunit (196 aa).

It belongs to the LeuD family. LeuD type 1 subfamily. In terms of assembly, heterodimer of LeuC and LeuD.

The catalysed reaction is (2R,3S)-3-isopropylmalate = (2S)-2-isopropylmalate. It functions in the pathway amino-acid biosynthesis; L-leucine biosynthesis; L-leucine from 3-methyl-2-oxobutanoate: step 2/4. Catalyzes the isomerization between 2-isopropylmalate and 3-isopropylmalate, via the formation of 2-isopropylmaleate. The sequence is that of 3-isopropylmalate dehydratase small subunit from Herpetosiphon aurantiacus (strain ATCC 23779 / DSM 785 / 114-95).